The chain runs to 135 residues: Ribonuclease VapC9 (135 aa).

The PINc domain maps to 15–118 (VVDTNVLMYV…LKRKAKQRGI (104 aa)). Mg(2+)-binding residues include aspartate 17 and aspartate 88.

The protein belongs to the PINc/VapC protein family. Dimer. The cofactor is Mg(2+).

Toxic component of a type II toxin-antitoxin (TA) system. An RNase. The polypeptide is Ribonuclease VapC9 (Archaeoglobus fulgidus (strain ATCC 49558 / DSM 4304 / JCM 9628 / NBRC 100126 / VC-16)).